We begin with the raw amino-acid sequence, 345 residues long: Probable dual-specificity RNA methyltransferase RlmN (345 aa).

E90 (proton acceptor) is an active-site residue. In terms of domain architecture, Radical SAM core spans 96–327 (QSYGNSVCVT…CIVRREFGHD (232 aa)). C103 and C332 are disulfide-bonded. [4Fe-4S] cluster-binding residues include C110, C114, and C117. Residues 160-161 (GE), S192, 215-217 (SLH), and N291 contribute to the S-adenosyl-L-methionine site. Residue C332 is the S-methylcysteine intermediate of the active site.

This sequence belongs to the radical SAM superfamily. RlmN family. The cofactor is [4Fe-4S] cluster.

The protein resides in the cytoplasm. It catalyses the reaction adenosine(2503) in 23S rRNA + 2 reduced [2Fe-2S]-[ferredoxin] + 2 S-adenosyl-L-methionine = 2-methyladenosine(2503) in 23S rRNA + 5'-deoxyadenosine + L-methionine + 2 oxidized [2Fe-2S]-[ferredoxin] + S-adenosyl-L-homocysteine. It carries out the reaction adenosine(37) in tRNA + 2 reduced [2Fe-2S]-[ferredoxin] + 2 S-adenosyl-L-methionine = 2-methyladenosine(37) in tRNA + 5'-deoxyadenosine + L-methionine + 2 oxidized [2Fe-2S]-[ferredoxin] + S-adenosyl-L-homocysteine. Functionally, specifically methylates position 2 of adenine 2503 in 23S rRNA and position 2 of adenine 37 in tRNAs. This is Probable dual-specificity RNA methyltransferase RlmN from Spiroplasma citri.